Consider the following 295-residue polypeptide: MSAKRTFTRIGAILGATALAGVTLTACGDSSGGDGFLAAIENGSVNVGTKYDQPGLGLRNPDNSMSGLDVDVAEYVVNSIADDKGWDHPTIEWRESPSAQRETLIQNGEVDMIAATYSINAGRSESVNFGGPYLLTHQALLVRQDDDRIETLEDLDNGLILCSVSGSTPAQKVKDVLPGVQLQEYDTYSSCVEALSQGNVDALTTDATILFGYSQQYEGDFRVVEMEKDGEPFTDEYYGIGLKKDDQEGTDAINAALERMYADGTFQRLLTENLGEDSVVVEEGTPGDLSFLDAS.

The N-terminal stretch at 1 to 26 is a signal peptide; it reads MSAKRTFTRIGAILGATALAGVTLTA. The N-palmitoyl cysteine moiety is linked to residue Cys-27. Residue Cys-27 is the site of S-diacylglycerol cysteine attachment.

The protein belongs to the bacterial solute-binding protein 3 family. The complex is composed of two ATP-binding proteins (GluA), two transmembrane proteins (GluC and GluD) and a solute-binding protein (GluB).

Its subcellular location is the cell membrane. Its activity is regulated as follows. Binding of glutamate or asparatate induces a higher thermal stability of the protein structure. Part of the ABC transporter complex GluABCD involved in glutamate uptake. Binds glutamate with a high affinity. Also binds aspartate with high affinity, suggesting that GluB could be involved in the transport of both amino acid residues into the cell. This chain is Glutamate-binding protein GluB, found in Corynebacterium glutamicum (strain ATCC 13032 / DSM 20300 / JCM 1318 / BCRC 11384 / CCUG 27702 / LMG 3730 / NBRC 12168 / NCIMB 10025 / NRRL B-2784 / 534).